The sequence spans 356 residues: Histidinol-phosphate aminotransferase (356 aa).

K214 carries the N6-(pyridoxal phosphate)lysine modification.

This sequence belongs to the class-II pyridoxal-phosphate-dependent aminotransferase family. Histidinol-phosphate aminotransferase subfamily. In terms of assembly, homodimer. Pyridoxal 5'-phosphate serves as cofactor.

The catalysed reaction is L-histidinol phosphate + 2-oxoglutarate = 3-(imidazol-4-yl)-2-oxopropyl phosphate + L-glutamate. Its pathway is amino-acid biosynthesis; L-histidine biosynthesis; L-histidine from 5-phospho-alpha-D-ribose 1-diphosphate: step 7/9. The chain is Histidinol-phosphate aminotransferase from Escherichia fergusonii (strain ATCC 35469 / DSM 13698 / CCUG 18766 / IAM 14443 / JCM 21226 / LMG 7866 / NBRC 102419 / NCTC 12128 / CDC 0568-73).